The following is an 853-amino-acid chain: uncharacterized protein (853 aa).

Residues 1–11 (MAPRKKAVTKK) show a composition bias toward basic residues. Disordered stretches follow at residues 1-448 (MAPR…SNNV), 485-621 (IAPT…NYFN), and 635-658 (ENYKNNGKNENNNNNNNKNKNEDE). Residues 20-37 (IEEEIIEEPVDEIVESDG) show a composition bias toward acidic residues. Residues 42–55 (NKKKGKRKSSKKSK) are compositionally biased toward basic residues. A compositionally biased stretch (acidic residues) spans 60 to 74 (ENVEEEEQDQEEEEE). Over residues 75 to 87 (GNKKQKEENDADK) the composition is skewed to basic and acidic residues. Over residues 88–107 (KSRKHDEHRKKRDSKNRRSH) the composition is skewed to basic residues. A compositionally biased stretch (acidic residues) spans 112–121 (ENEEGEEDDE). The segment covering 124–139 (RKKRRRRKHREKRKKN) has biased composition (basic residues). Acidic residues-rich tracts occupy residues 143 to 166 (EEEEEEEQDDEHEDQNVEEDEEDV) and 179 to 197 (DFDEEEKEEEKEEEEEEEQ). The span at 216 to 228 (DKSKKRKSKKKKR) shows a compositional bias: basic residues. Composition is skewed to acidic residues over residues 232–260 (DDDDDDDDNDDDDDDQDEEKEYEQDEDVN) and 268–286 (KEEEEDEEKQSQGSEDEEK). Basic and acidic residues-rich tracts occupy residues 287–361 (QSEN…RDHY), 370–400 (SRDHRDHRDRDYRDRDRDHRDRSRDRDRDHY), and 411–425 (RSRDRDNDSKRDEKS). Low complexity-rich tracts occupy residues 426-447 (SSSNNSNNSTSTTSNNNASSNN), 510-613 (NNDN…SNSS), and 636-652 (NYKNNGKNENNNNNNNK).

This is an uncharacterized protein from Dictyostelium discoideum (Social amoeba).